The chain runs to 305 residues: Protoheme IX farnesyltransferase (305 aa).

9 consecutive transmembrane segments (helical) span residues Val26 to Asn46, Pro47 to Leu67, Leu98 to Trp118, Phe119 to Leu139, Ile147 to Gly167, Leu174 to Phe194, Ile220 to Gly240, Leu243 to Leu263, and Leu284 to Gly304.

Belongs to the UbiA prenyltransferase family. Protoheme IX farnesyltransferase subfamily. As to quaternary structure, interacts with CtaA.

The protein resides in the cell inner membrane. It carries out the reaction heme b + (2E,6E)-farnesyl diphosphate + H2O = Fe(II)-heme o + diphosphate. It functions in the pathway porphyrin-containing compound metabolism; heme O biosynthesis; heme O from protoheme: step 1/1. Its function is as follows. Converts heme B (protoheme IX) to heme O by substitution of the vinyl group on carbon 2 of heme B porphyrin ring with a hydroxyethyl farnesyl side group. In Paracoccus denitrificans (strain Pd 1222), this protein is Protoheme IX farnesyltransferase.